We begin with the raw amino-acid sequence, 242 residues long: Mediator of RNA polymerase II transcription subunit 19-A (242 aa).

Residues 1–15 (MTEIFSTLFGQNDAQ) are compositionally biased toward polar residues. 2 disordered regions span residues 1-33 (MTEI…PPPS) and 171-242 (PPKK…NSLR). Residues 171 to 184 (PPKKKSKHKHRHHH) show a composition bias toward basic residues. Basic and acidic residues predominate over residues 193–210 (TRTDPTKKKKKKDNEPER). Basic residues predominate over residues 211–223 (RKKKKDKKKKKNR). Over residues 232–242 (TGSQPNSNSLR) the composition is skewed to polar residues.

It belongs to the Mediator complex subunit 19 family. Component of the Mediator complex.

It is found in the nucleus. In terms of biological role, component of the Mediator complex, a coactivator involved in the regulated transcription of nearly all RNA polymerase II-dependent genes. Mediator functions as a bridge to convey information from gene-specific regulatory proteins to the basal RNA polymerase II transcription machinery. Mediator is recruited to promoters by direct interactions with regulatory proteins and serves as a scaffold for the assembly of a functional preinitiation complex with RNA polymerase II and the general transcription factors. The sequence is that of Mediator of RNA polymerase II transcription subunit 19-A (med19a) from Danio rerio (Zebrafish).